A 197-amino-acid chain; its full sequence is 3-isopropylmalate dehydratase small subunit (197 aa).

Belongs to the LeuD family. LeuD type 1 subfamily. As to quaternary structure, heterodimer of LeuC and LeuD.

The enzyme catalyses (2R,3S)-3-isopropylmalate = (2S)-2-isopropylmalate. It participates in amino-acid biosynthesis; L-leucine biosynthesis; L-leucine from 3-methyl-2-oxobutanoate: step 2/4. Functionally, catalyzes the isomerization between 2-isopropylmalate and 3-isopropylmalate, via the formation of 2-isopropylmaleate. The chain is 3-isopropylmalate dehydratase small subunit from Mycobacterium sp. (strain JLS).